The primary structure comprises 275 residues: Elongation factor Ts (275 aa).

An involved in Mg(2+) ion dislocation from EF-Tu region spans residues 80–83 (TDFV).

Belongs to the EF-Ts family.

The protein localises to the cytoplasm. Associates with the EF-Tu.GDP complex and induces the exchange of GDP to GTP. It remains bound to the aminoacyl-tRNA.EF-Tu.GTP complex up to the GTP hydrolysis stage on the ribosome. In Clavibacter sepedonicus (Clavibacter michiganensis subsp. sepedonicus), this protein is Elongation factor Ts.